Consider the following 402-residue polypeptide: Nicotinate phosphoribosyltransferase (402 aa).

H221 is modified (phosphohistidine; by autocatalysis).

The protein belongs to the NAPRTase family. Transiently phosphorylated on a His residue during the reaction cycle. Phosphorylation strongly increases the affinity for substrates and increases the rate of nicotinate D-ribonucleotide production. Dephosphorylation regenerates the low-affinity form of the enzyme, leading to product release.

The enzyme catalyses nicotinate + 5-phospho-alpha-D-ribose 1-diphosphate + ATP + H2O = nicotinate beta-D-ribonucleotide + ADP + phosphate + diphosphate. The protein operates within cofactor biosynthesis; NAD(+) biosynthesis; nicotinate D-ribonucleotide from nicotinate: step 1/1. Catalyzes the synthesis of beta-nicotinate D-ribonucleotide from nicotinate and 5-phospho-D-ribose 1-phosphate at the expense of ATP. The sequence is that of Nicotinate phosphoribosyltransferase from Sodalis glossinidius (strain morsitans).